The chain runs to 141 residues: Hemoglobin subunit alpha-1/2/3 (141 aa).

The 141-residue stretch at 1 to 141 (VLSPADKTNV…VGTVLTSKYR (141 aa)) folds into the Globin domain. S3 is modified (phosphoserine). N6-succinyllysine is present on K7. The residue at position 8 (T8) is a Phosphothreonine. Position 11 is an N6-succinyllysine (K11). K16 is modified (N6-acetyllysine; alternate). N6-succinyllysine; alternate is present on K16. Phosphotyrosine is present on Y24. S35 is modified (phosphoserine). K40 bears the N6-succinyllysine mark. S49 is subject to Phosphoserine. H58 is an O2 binding site. H87 serves as a coordination point for heme b. S102 is modified (phosphoserine). T108 bears the Phosphothreonine mark. Phosphoserine is present on residues S124 and S131. A phosphothreonine mark is found at T134 and T137. At S138 the chain carries Phosphoserine.

It belongs to the globin family. As to quaternary structure, heterotetramer of two alpha chains and two beta chains. Red blood cells.

Involved in oxygen transport from the lung to the various peripheral tissues. This Macaca nemestrina (Pig-tailed macaque) protein is Hemoglobin subunit alpha-1/2/3.